Here is a 77-residue protein sequence, read N- to C-terminus: Dermatoxin-B1 (77 aa).

An N-terminal signal peptide occupies residues 1 to 22; it reads MAFLKKSLFLVLFLGLVPLSLC. Residues 23-42 constitute a propeptide that is removed on maturation; the sequence is ESEKREGENEEEQEDDQSEE. Residues 24–45 form a disordered region; sequence SEKREGENEEEQEDDQSEEKRS. Acidic residues predominate over residues 30–40; it reads ENEEEQEDDQS. Q76 is modified (glutamine amide).

It belongs to the frog skin active peptide (FSAP) family. Dermatoxin subfamily. As to expression, highest expression in skin and to a lesser extent in brain and intestine.

It localises to the secreted. Its subcellular location is the target cell membrane. Functionally, possesses a potent antimicrobial activity against Gram-positive bacteria B.megaterium, C.glutamicum and S.aureus and mollicutes A.laidlawii and S.melliferum. Less active against Gram-negative bacteria B.cepacia, P.aeruginosa, S.typhimurium and S.meliloti. Probably acts by disturbing membrane functions with its amphipathic structure. The sequence is that of Dermatoxin-B1 from Phyllomedusa bicolor (Two-colored leaf frog).